We begin with the raw amino-acid sequence, 857 residues long: Putative serine/threonine-protein kinase receptor (857 aa).

The first 32 residues, 1-32 (MKGARNIYHHSYMSFLLVFVVMILIHPALSIY), serve as a signal peptide directing secretion. The Extracellular portion of the chain corresponds to 33-446 (INTLSSTESL…IAKKRNASGK (414 aa)). The Bulb-type lectin domain occupies 35–155 (TLSSTESLTI…SNNDASEYLW (121 aa)). 6 N-linked (GlcNAc...) asparagine glycosylation sites follow: asparagine 47, asparagine 120, asparagine 196, asparagine 260, asparagine 389, and asparagine 442. The 84-residue stretch at 350–433 (CSGDGFTRMK…DGQDLYVRLA (84 aa)) folds into the PAN domain. Disulfide bonds link cysteine 380/cysteine 405 and cysteine 388/cysteine 390. The chain crosses the membrane as a helical span at residues 447 to 466 (IISLTVGVSVLLLLIMFCLW). Residues 467-857 (KRKQKRAKAS…QYTCSVIDAR (391 aa)) are Cytoplasmic-facing. A Protein kinase domain is found at 528-779 (FSSCNKLGQG…PSIFQPQEVL (252 aa)). ATP-binding positions include 534–542 (LGQGGFGIV) and lysine 556. The active-site Proton acceptor is aspartate 653.

This sequence belongs to the protein kinase superfamily. Ser/Thr protein kinase family. Predominantly in the pistil and anther.

It localises to the membrane. It carries out the reaction L-seryl-[protein] + ATP = O-phospho-L-seryl-[protein] + ADP + H(+). The enzyme catalyses L-threonyl-[protein] + ATP = O-phospho-L-threonyl-[protein] + ADP + H(+). Its function is as follows. Involved in sporophytic self-incompatibility system (the inability of flowering plants to achieve self-fertilization), probably acting in combination with S-locus-specific glycoproteins. Interaction with a ligand in the extracellular domain triggers the protein kinase activity of the cytoplasmic domain. The polypeptide is Putative serine/threonine-protein kinase receptor (SRK6) (Brassica oleracea var. viridis (Flowering kale)).